Consider the following 220-residue polypeptide: Large ribosomal subunit protein uL3 (220 aa).

A disordered region spans residues 130–156; it reads AIKRHGQSRGPMSHGSHFHRAPGSVGM.

The protein belongs to the universal ribosomal protein uL3 family. In terms of assembly, part of the 50S ribosomal subunit. Forms a cluster with proteins L14 and L19.

In terms of biological role, one of the primary rRNA binding proteins, it binds directly near the 3'-end of the 23S rRNA, where it nucleates assembly of the 50S subunit. This chain is Large ribosomal subunit protein uL3, found in Staphylococcus aureus (strain Mu3 / ATCC 700698).